The chain runs to 321 residues: Cilia- and flagella-associated protein 161 (321 aa).

Residues 275–321 are disordered; sequence LSTMLDLPKPPAEDTRALEQEREQVSDPGARSTPDARGCVPQCTLPM. Over residues 285–299 the composition is skewed to basic and acidic residues; it reads PAEDTRALEQEREQV.

In terms of assembly, microtubule inner protein component of sperm flagellar doublet microtubules. In terms of tissue distribution, expressed in trachea multiciliated cells.

The protein localises to the cytoplasm. It localises to the cytoskeleton. Its subcellular location is the cilium axoneme. The protein resides in the flagellum axoneme. In terms of biological role, microtubule inner protein (MIP) part of the dynein-decorated doublet microtubules (DMTs) in cilia axoneme, which is required for motile cilia beating. This Bos taurus (Bovine) protein is Cilia- and flagella-associated protein 161.